The primary structure comprises 661 residues: Transketolase (661 aa).

A substrate-binding site is contributed by His-30. Thiamine diphosphate-binding positions include His-70 and 118–120 (GPL). The tract at residues 99–118 (STTPGHPEFRDTPGVEATTG) is disordered. Asp-159 is a binding site for Mg(2+). Residues Gly-160 and Asn-189 each contribute to the thiamine diphosphate site. Asn-189 and Val-191 together coordinate Mg(2+). Substrate is bound by residues His-266, Arg-357, and Ser-384. Residue His-266 coordinates thiamine diphosphate. Catalysis depends on Glu-411, which acts as the Proton donor. Residue Phe-437 coordinates thiamine diphosphate. Substrate is bound by residues His-461, Asp-469, and Arg-520.

This sequence belongs to the transketolase family. As to quaternary structure, homodimer. Mg(2+) is required as a cofactor. It depends on Ca(2+) as a cofactor. Mn(2+) serves as cofactor. The cofactor is Co(2+). Requires thiamine diphosphate as cofactor.

The catalysed reaction is D-sedoheptulose 7-phosphate + D-glyceraldehyde 3-phosphate = aldehydo-D-ribose 5-phosphate + D-xylulose 5-phosphate. Its function is as follows. Catalyzes the transfer of a two-carbon ketol group from a ketose donor to an aldose acceptor, via a covalent intermediate with the cofactor thiamine pyrophosphate. This chain is Transketolase (tkt), found in Physarum polycephalum (Slime mold).